A 406-amino-acid polypeptide reads, in one-letter code: Kelch domain-containing protein 2 (406 aa).

Kelch repeat units follow at residues 31 to 85 (ERSG…NTEG), 92 to 136 (SGSC…ERID), 148 to 207 (LGVW…AWSQ), 221 to 259 (HACA…NELI), 271 to 311 (HSLT…IQFN), and 322 to 359 (HTAC…IFSV).

As to quaternary structure, component of a CRL2(KLHDC2) E3 ubiquitin-protein ligase complex, also named ECS(KLHDC2) complex, composed of CUL2, Elongin BC (ELOB and ELOC), RBX1 and substrate-specific adapter KLHDC2. May form oligomers as a KLHDC2-ELOB-ELOC complex; this interaction is autoinhibitory for the E3 ligase complex as the substrate-binding site of KLHDC2 is blocked in the oligomer. Interacts with CREB3; interaction is direct and specific as it does not interact with CREB1, ATF4, ATF6, JUN, FOS, CEBPA or herpes simplex virus transactivator VP16. Autoubiquitinated by the CRL2(KLHDC2) E3 ligase complex.

The protein localises to the nucleus. The protein operates within protein modification; protein ubiquitination. Substrate-recognition component of a Cul2-RING (CRL2) E3 ubiquitin-protein ligase complex of the DesCEND (destruction via C-end degrons) pathway, which recognizes a C-degron located at the extreme C terminus of target proteins, leading to their ubiquitination and degradation. The C-degron recognized by the DesCEND pathway is usually a motif of less than ten residues and can be present in full-length proteins, truncated proteins or proteolytically cleaved forms. The CRL2(KLHDC2) complex specifically recognizes proteins with a diglycine (Gly-Gly) at the C-terminus, leading to their ubiquitination and degradation. The CRL2(KLHDC2) complex mediates ubiquitination and degradation of truncated SELENOK and SELENOS selenoproteins produced by failed UGA/Sec decoding, which end with a diglycine. The CRL2(KLHDC2) complex also recognizes proteolytically cleaved proteins ending with Gly-Gly, such as the N-terminal fragment of USP1, leading to their degradation. May also act as an indirect repressor of CREB3-mediated transcription by interfering with CREB3-DNA-binding. The protein is Kelch domain-containing protein 2 of Rattus norvegicus (Rat).